The sequence spans 211 residues: Scoloptoxin SSD43 (211 aa).

A signal peptide spans 1-20 (MNFVIYGVIVVLTSQLYVDG).

In terms of processing, contains 3 disulfide bonds. As to expression, expressed by the venom gland.

It localises to the secreted. Shows trypsin inhibiting activity. The protein is highly thermally stable, since its incubation in boiling water during 10 minutes does not reduce its activity. In Scolopendra dehaani (Thai centipede), this protein is Scoloptoxin SSD43.